The chain runs to 373 residues: Glutamate 5-kinase (373 aa).

Lys-15 lines the ATP pocket. Substrate contacts are provided by Ser-55, Asp-142, and Asn-154. ATP contacts are provided by residues 174 to 175 and 216 to 222; these read TD and TGGMATK. The PUA domain maps to 281–359; that stretch reads AGRIIVDDGA…SRIEAILGYR (79 aa).

Belongs to the glutamate 5-kinase family.

Its subcellular location is the cytoplasm. It carries out the reaction L-glutamate + ATP = L-glutamyl 5-phosphate + ADP. It functions in the pathway amino-acid biosynthesis; L-proline biosynthesis; L-glutamate 5-semialdehyde from L-glutamate: step 1/2. In terms of biological role, catalyzes the transfer of a phosphate group to glutamate to form L-glutamate 5-phosphate. In Pelobacter propionicus (strain DSM 2379 / NBRC 103807 / OttBd1), this protein is Glutamate 5-kinase.